Consider the following 572-residue polypeptide: Phosphoenolpyruvate-protein phosphotransferase (572 aa).

The Tele-phosphohistidine intermediate role is filled by H191. Residues R298 and R334 each coordinate phosphoenolpyruvate. E433 and D457 together coordinate Mg(2+). Residues 456 to 457 (ND) and R467 each bind phosphoenolpyruvate. The active-site Proton donor is C504.

Belongs to the PEP-utilizing enzyme family. As to quaternary structure, homodimer. It depends on Mg(2+) as a cofactor.

Its subcellular location is the cytoplasm. The enzyme catalyses L-histidyl-[protein] + phosphoenolpyruvate = N(pros)-phospho-L-histidyl-[protein] + pyruvate. Functionally, general (non sugar-specific) component of the phosphoenolpyruvate-dependent sugar phosphotransferase system (sugar PTS). This major carbohydrate active-transport system catalyzes the phosphorylation of incoming sugar substrates concomitantly with their translocation across the cell membrane. Enzyme I transfers the phosphoryl group from phosphoenolpyruvate (PEP) to the phosphoryl carrier protein (HPr). This chain is Phosphoenolpyruvate-protein phosphotransferase (ptsI), found in Staphylococcus epidermidis (strain ATCC 35984 / DSM 28319 / BCRC 17069 / CCUG 31568 / BM 3577 / RP62A).